We begin with the raw amino-acid sequence, 259 residues long: MRAILDAHPDVRCGGETMLLPSFLTWQAGWRNDWVNNSGITQEVFDDAVSAFITEIVAKHSELAPRLCNKDPYTALWLPTIRRLYPNAKFILMIRDARAVVHSMIERKVPVAGYNTSDEISMFVQWNQELRKMTFQCNNAPGQCIKVYYERLIQKPAEEILRITNFLDLPFSQQMLRHQDLIGDEVDLNDQEFSASQVKNSINTKALTSWFDCFSEETLRKLDDVAPFLGILGYDTSISKPDYSTFADDDFYQFKNFYS.

The cysteines at positions 13 and 68 are disulfide-linked. The Proton donor/acceptor role is filled by Glu-16. Asn-36 carries an N-linked (GlcNAc...) asparagine glycan. Positions 95, 103, and 107 each coordinate 3'-phosphoadenylyl sulfate. N-linked (GlcNAc...) asparagine glycosylation is present at Asn-115. Residues Cys-137 and Cys-144 are joined by a disulfide bond. Residues Tyr-149 and 194–203 (SASQVKNSIN) contribute to the 3'-phosphoadenylyl sulfate site.

The protein belongs to the protein sulfotransferase family.

It carries out the reaction L-tyrosyl-[protein] + 3'-phosphoadenylyl sulfate = O-sulfo-L-tyrosine-[protein] + adenosine 3',5'-bisphosphate + H(+). In terms of biological role, catalyzes the O-sulfation of tyrosine residues within acidic motifs of polypeptides, using 3'-phosphoadenylyl sulfate (PAPS) as cosubstrate. This chain is Putative protein-tyrosine sulfotransferase (tpst-2), found in Caenorhabditis elegans.